Consider the following 307-residue polypeptide: S-methyl-5'-thioadenosine phosphorylase (307 aa).

Phosphate-binding positions include serine 16, 59 to 60 (RH), and 92 to 93 (SA). Methionine 198 contributes to the substrate binding site. Serine 199 serves as a coordination point for phosphate. 222–224 (DYD) contacts substrate.

This sequence belongs to the PNP/MTAP phosphorylase family. MTAP subfamily. As to quaternary structure, homotrimer.

It is found in the cytoplasm. The protein localises to the nucleus. It carries out the reaction S-methyl-5'-thioadenosine + phosphate = 5-(methylsulfanyl)-alpha-D-ribose 1-phosphate + adenine. It functions in the pathway amino-acid biosynthesis; L-methionine biosynthesis via salvage pathway; S-methyl-5-thio-alpha-D-ribose 1-phosphate from S-methyl-5'-thioadenosine (phosphorylase route): step 1/1. Catalyzes the reversible phosphorylation of S-methyl-5'-thioadenosine (MTA) to adenine and 5-methylthioribose-1-phosphate. Involved in the breakdown of MTA, a major by-product of polyamine biosynthesis. Responsible for the first step in the methionine salvage pathway after MTA has been generated from S-adenosylmethionine. Has broad substrate specificity with 6-aminopurine nucleosides as preferred substrates. The polypeptide is S-methyl-5'-thioadenosine phosphorylase (Schizosaccharomyces pombe (strain 972 / ATCC 24843) (Fission yeast)).